The sequence spans 252 residues: 3-dehydroquinate dehydratase (252 aa).

3-dehydroquinate contacts are provided by residues glutamate 46–arginine 48 and arginine 82. Catalysis depends on histidine 143, which acts as the Proton donor/acceptor. Catalysis depends on lysine 170, which acts as the Schiff-base intermediate with substrate. Positions 212, 231, and 235 each coordinate 3-dehydroquinate.

Belongs to the type-I 3-dehydroquinase family. Homodimer.

It catalyses the reaction 3-dehydroquinate = 3-dehydroshikimate + H2O. Its pathway is metabolic intermediate biosynthesis; chorismate biosynthesis; chorismate from D-erythrose 4-phosphate and phosphoenolpyruvate: step 3/7. In terms of biological role, involved in the third step of the chorismate pathway, which leads to the biosynthesis of aromatic amino acids. Catalyzes the cis-dehydration of 3-dehydroquinate (DHQ) and introduces the first double bond of the aromatic ring to yield 3-dehydroshikimate. The sequence is that of 3-dehydroquinate dehydratase from Listeria monocytogenes serotype 4b (strain F2365).